Here is a 259-residue protein sequence, read N- to C-terminus: Ribonuclease PH (259 aa).

Phosphate is bound by residues R88 and G126–R128.

This sequence belongs to the RNase PH family. As to quaternary structure, homohexameric ring arranged as a trimer of dimers.

It catalyses the reaction tRNA(n+1) + phosphate = tRNA(n) + a ribonucleoside 5'-diphosphate. Its function is as follows. Phosphorolytic 3'-5' exoribonuclease that plays an important role in tRNA 3'-end maturation. Removes nucleotide residues following the 3'-CCA terminus of tRNAs; can also add nucleotides to the ends of RNA molecules by using nucleoside diphosphates as substrates, but this may not be physiologically important. Probably plays a role in initiation of 16S rRNA degradation (leading to ribosome degradation) during starvation. The chain is Ribonuclease PH from Mycobacterium ulcerans (strain Agy99).